We begin with the raw amino-acid sequence, 305 residues long: Mas-related G-protein coupled receptor member A2B (305 aa).

The Extracellular segment spans residues 1–17 (MDETLPGSINIRILIPK). Residues 18-38 (LMIIIFGLVGLMGNAIVFWLL) traverse the membrane as a helical segment. Topologically, residues 39 to 53 (GFHLRRNAFSVYILN) are cytoplasmic. Residues 54–74 (LALADFLFLLSSIIASTLFLL) traverse the membrane as a helical segment. The Extracellular segment spans residues 75-78 (KVSY). The helical transmembrane segment at 79–99 (LSIIFHLCFNTIMMVVYITGI) threads the bilayer. The Cytoplasmic segment spans residues 100–132 (SMLSAISTECCLSVLCPTWYRCHRPVHTSTVMC). Residues 133 to 153 (AVIWVLSLLICILNSYFCAVL) traverse the membrane as a helical segment. The Extracellular portion of the chain corresponds to 154–167 (HTRYDNDNECLATN). Residues 168–188 (IFTASYMIFLLVVLCLSSLAL) form a helical membrane-spanning segment. The Cytoplasmic portion of the chain corresponds to 189–207 (LARLFCGAGQMKLTRFHVT). The chain crosses the membrane as a helical span at residues 208–228 (ILLTLLVFLLCGLPFVIYCIL). Residues 229-244 (LFKIKDDFHVLDVNFY) are Extracellular-facing. Residues 245 to 265 (LALEVLTAINSCANPIIYFFV) form a helical membrane-spanning segment. Residues 266 to 305 (GSFRHQLKHQTLKMVLQSALQDTPETAENMVEMSSNKAEP) are Cytoplasmic-facing.

The protein belongs to the G-protein coupled receptor 1 family. Mas subfamily. In terms of tissue distribution, expressed in a subset of sensory neurons that includes nociceptors. Expressed in the subclass of non-peptidergic sensory neurons that are IB4(+) and VR1(-).

The protein localises to the cell membrane. Orphan receptor. May be a receptor for RFamide-family neuropeptides such as NPFF and NPAF, which are analgesic in vivo. May regulate nociceptor function and/or development, including the sensation or modulation of pain. This chain is Mas-related G-protein coupled receptor member A2B, found in Mus musculus (Mouse).